The chain runs to 1168 residues: Probable pre-mRNA-splicing factor ATP-dependent RNA helicase DEAH5 (1168 aa).

The disordered stretch occupies residues 76-206; it reads IYPPKPKSEK…KDEYVEEDKG (131 aa). Basic and acidic residues-rich tracts occupy residues 81 to 172 and 180 to 206; these read PKSE…DRRS and GRGD…EDKG. The S1 motif domain occupies 214-283; that stretch reads YQVYKGRVTR…SSDKYSLSMR (70 aa). Residues 289-326 are disordered; sequence TGRDLIPLRKPSDEDDSSRSNPSYRTKDGQVTKTGISG. Phosphoserine is present on serine 411. Residues 525–688 enclose the Helicase ATP-binding domain; sequence IQAVHDNQVL…FFNCNIFTIP (164 aa). 538-545 is an ATP binding site; the sequence is GETGSGKT. The DEAH box motif lies at 635–638; the sequence is DEAH. The Helicase C-terminal domain maps to 706–886; the sequence is YLDAALITVL…MTTLTMKAMG (181 aa).

The protein belongs to the DEAD box helicase family. DEAH subfamily. PRP22 sub-subfamily.

Its subcellular location is the nucleus. The catalysed reaction is ATP + H2O = ADP + phosphate + H(+). May be involved in pre-mRNA splicing. This is Probable pre-mRNA-splicing factor ATP-dependent RNA helicase DEAH5 from Arabidopsis thaliana (Mouse-ear cress).